A 525-amino-acid polypeptide reads, in one-letter code: Cytochrome P450 750A1 (525 aa).

The helical transmembrane segment at 13-33 threads the bilayer; it reads PLPLPAILIATFIFFFSCWIL. Cys465 provides a ligand contact to heme.

This sequence belongs to the cytochrome P450 family. Heme is required as a cofactor.

Its subcellular location is the membrane. This is Cytochrome P450 750A1 (CYP750A1) from Pinus taeda (Loblolly pine).